A 318-amino-acid chain; its full sequence is Apo-salmochelin esterase (318 aa).

Residues 13 to 32 (KAIFFHLSCLTLICSAQVYA) form a helical membrane-spanning segment. Catalysis depends on residues Ser189 and His287.

Belongs to the esterase D family. Monomer.

It localises to the cell inner membrane. The enzyme catalyses enterobactin + H2O = N-(2,3-dihydroxybenzoyl)-L-serine trimer. It catalyses the reaction monoglucosyl-enterobactin + H2O = [N-(2,3-dihydroxybenzoyl)-L-seryl]2-N-(C-5-[deoxy-beta-D-glucosyl]-2,3-dihydroxybenzoyl)-L-serine + H(+). It carries out the reaction diglucosyl-enterobactin + H2O = N-(2,3-dihydroxybenzoyl)-L-seryl-[N-(C-5-[deoxy-beta-D-glucosyl]-2,3-dihydroxybenzoyl)-L-serine]2 + H(+). The catalysed reaction is triglucosyl-enterobactin + H2O = [N-(C-5-[deoxy-beta-D-glucosyl]-2,3-dihydroxybenzoyl)-L-serine]3 + H(+). In terms of biological role, catalyzes the hydrolysis of both the apo and Fe3(+)-bound forms of enterobactin (Ent), monoglucosyl-C-Ent (MGE), diglucosyl-C-Ent (DGE) and triglucosyl-C-Ent (TGE). It prefers apo siderophores as substrates and hydrolyzes the Fe3(+)-bound siderophores very inefficiently. Tends to hydrolyze the trilactone just once to produce linearized trimers. May hydrolyze and linearize some or all of apo enterobactins while they are being exported. The protein is Apo-salmochelin esterase of Escherichia coli O6:H1 (strain CFT073 / ATCC 700928 / UPEC).